The sequence spans 124 residues: Small ribosomal subunit protein uS12 (124 aa).

2 disordered regions span residues 9–32 and 105–124; these read RKGR…QRRG and QGVK…KEKS. Positions 108–118 are enriched in basic residues; sequence KNRKQARSRYG.

Belongs to the universal ribosomal protein uS12 family. As to quaternary structure, part of the 30S ribosomal subunit. Contacts proteins S8 and S17. May interact with IF1 in the 30S initiation complex.

In terms of biological role, with S4 and S5 plays an important role in translational accuracy. Its function is as follows. Interacts with and stabilizes bases of the 16S rRNA that are involved in tRNA selection in the A site and with the mRNA backbone. Located at the interface of the 30S and 50S subunits, it traverses the body of the 30S subunit contacting proteins on the other side and probably holding the rRNA structure together. The combined cluster of proteins S8, S12 and S17 appears to hold together the shoulder and platform of the 30S subunit. The chain is Small ribosomal subunit protein uS12 from Nocardia farcinica (strain IFM 10152).